A 130-amino-acid polypeptide reads, in one-letter code: Small ribosomal subunit protein uS9 (130 aa).

Residues 105-130 (TRDARMKERKKPGLKKARKASQFSKR) are disordered. Over residues 111-130 (KERKKPGLKKARKASQFSKR) the composition is skewed to basic residues.

Belongs to the universal ribosomal protein uS9 family.

The polypeptide is Small ribosomal subunit protein uS9 (Lactiplantibacillus plantarum (strain ATCC BAA-793 / NCIMB 8826 / WCFS1) (Lactobacillus plantarum)).